The primary structure comprises 131 residues: MSWQAYVDEHLMCEIDGHHLSAAAIIGHDGSVWAQSSTFPQFKPEEIAAIIKDFDEPGSLAPTGLHLGGIKYMVIQGESGAVIRGKKGAGGITVKKTSQALIFGIYDEPLTPGQCNMIVERLGDYLLKQGL.

Cys-13 and Cys-115 are disulfide-bonded. Positions 81-97 (AVIRGKKGAGGITVKKT) match the Involved in PIP2 interaction motif. Thr-111 is modified (phosphothreonine).

Belongs to the profilin family. Occurs in many kinds of cells as a complex with monomeric actin in a 1:1 ratio. In terms of processing, phosphorylated by MAP kinases.

The protein localises to the cytoplasm. The protein resides in the cytoskeleton. Functionally, binds to actin and affects the structure of the cytoskeleton. At high concentrations, profilin prevents the polymerization of actin, whereas it enhances it at low concentrations. The chain is Profilin-5 from Corylus avellana (European hazel).